The sequence spans 330 residues: DNA-directed RNA polymerase subunit alpha (330 aa).

The segment at 1–237 (MYTEINEMLT…RQLHAFVDMK (237 aa)) is alpha N-terminal domain (alpha-NTD). An alpha C-terminal domain (alpha-CTD) region spans residues 251–330 (FDPVLLRSVD…ENWPPASLGE (80 aa)).

This sequence belongs to the RNA polymerase alpha chain family. As to quaternary structure, homodimer. The RNAP catalytic core consists of 2 alpha, 1 beta, 1 beta' and 1 omega subunit. When a sigma factor is associated with the core the holoenzyme is formed, which can initiate transcription.

It carries out the reaction RNA(n) + a ribonucleoside 5'-triphosphate = RNA(n+1) + diphosphate. Functionally, DNA-dependent RNA polymerase catalyzes the transcription of DNA into RNA using the four ribonucleoside triphosphates as substrates. This Legionella pneumophila (strain Corby) protein is DNA-directed RNA polymerase subunit alpha.